The primary structure comprises 380 residues: Erythronate-4-phosphate dehydrogenase (380 aa).

Residues Ser-45 and Thr-66 each contribute to the substrate site. Residues 126–127, Asp-146, Thr-174, 205–207, and Asp-231 contribute to the NAD(+) site; these read QV and ASR. The active site involves Arg-207. Glu-236 is a catalytic residue. The active-site Proton donor is the His-253. Gly-256 provides a ligand contact to NAD(+). Tyr-257 lines the substrate pocket.

Belongs to the D-isomer specific 2-hydroxyacid dehydrogenase family. PdxB subfamily. Homodimer.

It localises to the cytoplasm. The catalysed reaction is 4-phospho-D-erythronate + NAD(+) = (R)-3-hydroxy-2-oxo-4-phosphooxybutanoate + NADH + H(+). Its pathway is cofactor biosynthesis; pyridoxine 5'-phosphate biosynthesis; pyridoxine 5'-phosphate from D-erythrose 4-phosphate: step 2/5. Functionally, catalyzes the oxidation of erythronate-4-phosphate to 3-hydroxy-2-oxo-4-phosphonooxybutanoate. The protein is Erythronate-4-phosphate dehydrogenase of Pseudomonas syringae pv. tomato (strain ATCC BAA-871 / DC3000).